The sequence spans 664 residues: Probable L-type lectin-domain containing receptor kinase V.3 (664 aa).

A signal peptide spans 1–26 (MSMSCKINWLMVLVIIALSNLESSLG). The Extracellular segment spans residues 27-278 (RLVFEGSAGL…YPKAESQVKL (252 aa)). The interval 28–250 (LVFEGSAGLM…AIHYMWMWYV (223 aa)) is legume-lectin like. Asparagine 69, asparagine 116, asparagine 122, asparagine 174, and asparagine 197 each carry an N-linked (GlcNAc...) asparagine glycan. The chain crosses the membrane as a helical span at residues 279–299 (IVLVTFLTLALFVALAASALI). The Cytoplasmic segment spans residues 300–664 (VFFYKRHKKL…LPSGRPRLFL (365 aa)). The 283-residue stretch at 335–617 (NGFKQLLGEG…GVSELPDNLL (283 aa)) folds into the Protein kinase domain. Residues 341 to 349 (LGEGGFGPV) and lysine 364 contribute to the ATP site. Aspartate 461 functions as the Proton acceptor in the catalytic mechanism.

The protein in the C-terminal section; belongs to the protein kinase superfamily. Ser/Thr protein kinase family. In the N-terminal section; belongs to the leguminous lectin family.

Its subcellular location is the cell membrane. The catalysed reaction is L-seryl-[protein] + ATP = O-phospho-L-seryl-[protein] + ADP + H(+). It catalyses the reaction L-threonyl-[protein] + ATP = O-phospho-L-threonyl-[protein] + ADP + H(+). This chain is Probable L-type lectin-domain containing receptor kinase V.3 (LECRK53), found in Arabidopsis thaliana (Mouse-ear cress).